The chain runs to 302 residues: Vacuolar protein sorting-associated protein 26A (302 aa).

The protein belongs to the VPS26 family. In terms of assembly, component of the retromer complex which consists of VPS29 (MAG1), VPS26 (VPS26A or VPS26B), VPS35 (VPS35A or VPS35B or VPS35C), VPS5/17 (SNX1 or SNX2A or SNX2B). Component of a retromer subcomplex consisting of VPS29 (MAG1), VPS26 (VPS26A or VPS26B), VPS35 (VPS35A or VPS35B or VPS35C).

The protein resides in the cytoplasm. It is found in the endosome membrane. It localises to the prevacuolar compartment membrane. Its subcellular location is the golgi apparatus. The protein localises to the trans-Golgi network membrane. Plays a role in vesicular protein sorting. Component of the membrane-associated retromer complex which is essential in endosome-to-Golgi retrograde transport. The VPS29-VPS26-VPS35 subcomplex may be involved in recycling of specific cargos from endosome to the plasma membrane. In Arabidopsis thaliana (Mouse-ear cress), this protein is Vacuolar protein sorting-associated protein 26A (VPS26A).